A 963-amino-acid chain; its full sequence is TBC1 domain family member 2B (963 aa).

A disordered region spans residues 1–30; the sequence is MPGAGARAEEGGGGGEGAAQGAAAEPGAGP. The span at 19 to 30 shows a compositional bias: low complexity; the sequence is AQGAAAEPGAGP. Residues 34 to 139 enclose the PH domain; that stretch reads PARLCGYLQK…WLQELQQKRW (106 aa). A phosphoserine mark is found at S155 and S317. Residues 272-348 form a disordered region; sequence EKKKLTPEGN…EMQLQVQSQQ (77 aa). The span at 318–348 shows a compositional bias: low complexity; that stretch reads GDPSSEGTSGSGSVSIRKPASEMQLQVQSQQ. Positions 337–535 form a coiled coil; it reads ASEMQLQVQS…AKYSSLEAKL (199 aa). Phosphoserine is present on S473. The Rab-GAP TBC domain maps to 662–856; the sequence is GIPHEHRSKV…KIWDSFLYEG (195 aa). S957 carries the post-translational modification Phosphoserine.

It is found in the early endosome. GTPase-activating protein that plays a role in the early steps of endocytosis. The chain is TBC1 domain family member 2B (TBC1D2B) from Homo sapiens (Human).